The sequence spans 125 residues: MSLPTDRKYTTSHEWVKAEGDVFVVGITENAQDQLGDLVFVGDVSVGANLKAGETAGVVESVKAASDIYAPVDGVIVAFNDELEANPNLINESAFTAWIFKIKPLNAADADKLLDAAGYEAVANG.

The region spanning 22–103 (VFVVGITENA…AFTAWIFKIK (82 aa)) is the Lipoyl-binding domain. K63 is subject to N6-lipoyllysine.

It belongs to the GcvH family. In terms of assembly, the glycine cleavage system is composed of four proteins: P, T, L and H. (R)-lipoate is required as a cofactor.

In terms of biological role, the glycine cleavage system catalyzes the degradation of glycine. The H protein shuttles the methylamine group of glycine from the P protein to the T protein. The protein is Glycine cleavage system H protein of Bordetella avium (strain 197N).